The primary structure comprises 254 residues: Adenosine 5'-phosphosulfate reductase (254 aa).

The [4Fe-4S] cluster site is built by Cys140, Cys141, Cys223, and Cys226. Cys249 acts as the Nucleophile; cysteine thiosulfonate intermediate in catalysis.

The protein belongs to the PAPS reductase family. CysH subfamily. Requires [4Fe-4S] cluster as cofactor.

It localises to the cytoplasm. The enzyme catalyses [thioredoxin]-disulfide + sulfite + AMP + 2 H(+) = adenosine 5'-phosphosulfate + [thioredoxin]-dithiol. It functions in the pathway sulfur metabolism; hydrogen sulfide biosynthesis; sulfite from sulfate. Its function is as follows. Catalyzes the formation of sulfite from adenosine 5'-phosphosulfate (APS) using thioredoxin as an electron donor. In Mycobacterium bovis (strain ATCC BAA-935 / AF2122/97), this protein is Adenosine 5'-phosphosulfate reductase.